Consider the following 353-residue polypeptide: Photosystem II protein D1 (353 aa).

T2 bears the N-acetylthreonine mark. T2 carries the post-translational modification Phosphothreonine. The next 3 helical transmembrane spans lie at Y29–S46, H118–L133, and W142–A156. H118 is a chlorophyll a binding site. Y126 is a binding site for pheophytin a. [CaMn4O5] cluster-binding residues include D170 and E189. Residues F197–L218 traverse the membrane as a helical segment. H198 is a binding site for chlorophyll a. A quinone is bound by residues H215 and S264 to F265. Residue H215 participates in Fe cation binding. H272 lines the Fe cation pocket. The helical transmembrane segment at F274 to L288 threads the bilayer. [CaMn4O5] cluster contacts are provided by H332, E333, D342, and A344. A propeptide spanning residues A345–G353 is cleaved from the precursor.

This sequence belongs to the reaction center PufL/M/PsbA/D family. PSII is composed of 1 copy each of membrane proteins PsbA, PsbB, PsbC, PsbD, PsbE, PsbF, PsbH, PsbI, PsbJ, PsbK, PsbL, PsbM, PsbT, PsbX, PsbY, PsbZ, Psb30/Ycf12, at least 3 peripheral proteins of the oxygen-evolving complex and a large number of cofactors. It forms dimeric complexes. It depends on The D1/D2 heterodimer binds P680, chlorophylls that are the primary electron donor of PSII, and subsequent electron acceptors. It shares a non-heme iron and each subunit binds pheophytin, quinone, additional chlorophylls, carotenoids and lipids. D1 provides most of the ligands for the Mn4-Ca-O5 cluster of the oxygen-evolving complex (OEC). There is also a Cl(-1) ion associated with D1 and D2, which is required for oxygen evolution. The PSII complex binds additional chlorophylls, carotenoids and specific lipids. as a cofactor. Post-translationally, tyr-161 forms a radical intermediate that is referred to as redox-active TyrZ, YZ or Y-Z. C-terminally processed by CTPA; processing is essential to allow assembly of the oxygen-evolving complex and thus photosynthetic growth.

It is found in the plastid. It localises to the chloroplast thylakoid membrane. The catalysed reaction is 2 a plastoquinone + 4 hnu + 2 H2O = 2 a plastoquinol + O2. Functionally, photosystem II (PSII) is a light-driven water:plastoquinone oxidoreductase that uses light energy to abstract electrons from H(2)O, generating O(2) and a proton gradient subsequently used for ATP formation. It consists of a core antenna complex that captures photons, and an electron transfer chain that converts photonic excitation into a charge separation. The D1/D2 (PsbA/PsbD) reaction center heterodimer binds P680, the primary electron donor of PSII as well as several subsequent electron acceptors. The protein is Photosystem II protein D1 of Drimys granadensis.